Here is a 36-residue protein sequence, read N- to C-terminus: Dermonecrotic toxin LgSicTox-beta-LOXN2 (36 aa).

The protein belongs to the arthropod phospholipase D family. Class II subfamily. It depends on Mg(2+) as a cofactor. Post-translationally, contains 2 disulfide bonds. Expressed by the venom gland.

The protein resides in the secreted. It carries out the reaction an N-(acyl)-sphingosylphosphocholine = an N-(acyl)-sphingosyl-1,3-cyclic phosphate + choline. The catalysed reaction is an N-(acyl)-sphingosylphosphoethanolamine = an N-(acyl)-sphingosyl-1,3-cyclic phosphate + ethanolamine. It catalyses the reaction a 1-acyl-sn-glycero-3-phosphocholine = a 1-acyl-sn-glycero-2,3-cyclic phosphate + choline. The enzyme catalyses a 1-acyl-sn-glycero-3-phosphoethanolamine = a 1-acyl-sn-glycero-2,3-cyclic phosphate + ethanolamine. In terms of biological role, dermonecrotic toxins cleave the phosphodiester linkage between the phosphate and headgroup of certain phospholipids (sphingolipid and lysolipid substrates), forming an alcohol (often choline) and a cyclic phosphate. This toxin acts on sphingomyelin (SM). It may also act on ceramide phosphoethanolamine (CPE), lysophosphatidylcholine (LPC) and lysophosphatidylethanolamine (LPE), but not on lysophosphatidylserine (LPS), and lysophosphatidylglycerol (LPG). It acts by transphosphatidylation, releasing exclusively cyclic phosphate products as second products. Induces dermonecrosis, hemolysis, increased vascular permeability, edema, inflammatory response, and platelet aggregation. In Loxosceles gaucho (Spider), this protein is Dermonecrotic toxin LgSicTox-beta-LOXN2.